A 230-amino-acid chain; its full sequence is UPF0758 protein plu4865 (230 aa).

An MPN domain is found at 108 to 230 (IMSSPSVTQE…CVSFAERGWI (123 aa)). Zn(2+) is bound by residues His179, His181, and Asp192. Positions 179–192 (HNHPSGHAEPSLAD) match the JAMM motif motif.

The protein belongs to the UPF0758 family. YicR subfamily.

The polypeptide is UPF0758 protein plu4865 (Photorhabdus laumondii subsp. laumondii (strain DSM 15139 / CIP 105565 / TT01) (Photorhabdus luminescens subsp. laumondii)).